We begin with the raw amino-acid sequence, 291 residues long: Probable L-ascorbate peroxidase 3, peroxisomal (291 aa).

The active-site Proton acceptor is H41. The segment at 114-133 is disordered; the sequence is YVPGRRDSSDSPEEGRLPDA. The span at 116-133 shows a compositional bias: basic and acidic residues; the sequence is PGRRDSSDSPEEGRLPDA. H161 contributes to the heme b binding site. The K(+) site is built by T162, T178, and D185. A helical transmembrane segment spans residues 263–283; sequence LLMQTAAGVAVAAAVVAWAYL.

Belongs to the peroxidase family. Ascorbate peroxidase subfamily. Heme b is required as a cofactor. Expressed in stems.

It localises to the peroxisome membrane. It catalyses the reaction L-ascorbate + H2O2 = L-dehydroascorbate + 2 H2O. Functionally, plays a key role in hydrogen peroxide removal. This is Probable L-ascorbate peroxidase 3, peroxisomal from Oryza sativa subsp. japonica (Rice).